A 318-amino-acid chain; its full sequence is WRKY transcription factor 28 (318 aa).

2 stretches are compositionally biased toward polar residues: residues 74-84 and 106-115; these read SSEVFNSSIDQ and RVSPSNSSSS. The segment at 74 to 158 is disordered; the sequence is SSEVFNSSID…KTEVKKQREP (85 aa). 2 stretches are compositionally biased toward basic and acidic residues: residues 116–126 and 148–158; these read EADHPGEDSGK and KKTEVKKQREP. The segment at residues 166–231 is a DNA-binding region (WRKY); it reads SEVDHLEDGY…YEGQHNHPIP (66 aa).

The protein belongs to the WRKY group II-c family.

It localises to the nucleus. Its function is as follows. Transcription factor. Interacts specifically with the W box (5'-(T)TGAC[CT]-3'), a frequently occurring elicitor-responsive cis-acting element. This is WRKY transcription factor 28 (WRKY28) from Arabidopsis thaliana (Mouse-ear cress).